The chain runs to 488 residues: SAGA complex subunit HFI1 (488 aa).

Disordered regions lie at residues 1–58 and 352–383; these read MSAI…QGPN and QLDD…IGDI. A compositionally biased stretch (polar residues) spans 37-58; it reads AVSNHTEPNNGNNETAEPQGPN.

Component of the 1.8 MDa SAGA (Spt-Ada-Gcn5 acetyltransferase) complex, which is composed of 19 subunits TRA1, SPT7, TAF5, NGG1/ADA3, SGF73, SPT20/ADA5, SPT8, TAF12, TAF6, HFI1/ADA1, UBP8, GCN5, ADA2, SPT3, SGF29, TAF10, TAF9, SGF11 and SUS1. The SAGA complex is composed of 4 modules, namely the HAT (histone acetyltransferase) module (GCN5, ADA2, NGG1/ADA3 and SGF29), the DUB (deubiquitinating) module (UBP8, SGF11, SGF73 and SUS1), the core or TAF (TBP-associated factor) module (TAF5, TAF6, TAF9, TAF10 and TAF12), and the Tra1 or SPT (Suppressor of Ty) module (TRA1, HFI1/ADA1, SPT3, SPT7, SPT8 and SPT20/ADA5). The Tra1/SPT module binds activators, the core module recruits TBP (TATA-binding protein), the HAT module contains the histone H3 acetyltransferase GCN5, and the DUB module comprises the histone H2B deubiquitinase UBP8. Also identified in an altered form of SAGA, named SALSA (SAGA altered, Spt8 absent) or SLIK (SAGA-like) complex, which contains a C-terminal truncated form of SPT7 and is missing SPT8. However, it has been shown that the SAGA and SAGA-like SALSA/SLIK transcriptional coactivators are structurally and biochemically equivalent. Component of an ADA/GCN5 complex that consists of HFI1/ADA1, ADA2, NGG1/ADA3, SPT20/ADA5 and GCN5 and probably is a subcomplex of SAGA.

The protein resides in the nucleus. In terms of biological role, component of the transcription coactivator SAGA complex. SAGA acts as a general cofactor required for essentially all RNA polymerase II transcription. At the promoters, SAGA is required for transcription pre-initiation complex (PIC) recruitment. It influences RNA polymerase II transcriptional activity through different activities such as TBP interaction (via core/TAF module) and promoter selectivity, interaction with transcription activators (via Tra1/SPT module), and chromatin modification through histone acetylation (via HAT module) and deubiquitination (via DUB module). SAGA preferentially acetylates histones H3 (to form H3K9ac, H3K14ac, H3K18ac and H3K23ac) and H2B and deubiquitinates histone H2B. SAGA interacts with DNA via upstream activating sequences (UASs). Also identified in a modified version of SAGA named SALSA or SLIK. The cleavage of SPT7 and the absence of the SPT8 subunit in SLIK neither drive any major conformational differences in its structure compared with SAGA, nor significantly affect HAT, DUB, or DNA-binding activities. This is SAGA complex subunit HFI1 (HFI1) from Saccharomyces cerevisiae (strain ATCC 204508 / S288c) (Baker's yeast).